Consider the following 420-residue polypeptide: Tyrosine--tRNA ligase (420 aa).

Tyr-39 is an L-tyrosine binding site. Positions 44 to 53 (CTAPSLHIGS) match the 'HIGH' region motif. L-tyrosine contacts are provided by Tyr-176 and Gln-180. Positions 236 to 240 (KMGKT) match the 'KMSKS' region motif. Lys-239 serves as a coordination point for ATP. Positions 349-414 (IPLIDLLYDT…AGKKRHIKIL (66 aa)) constitute an S4 RNA-binding domain.

The protein belongs to the class-I aminoacyl-tRNA synthetase family. TyrS type 1 subfamily. As to quaternary structure, homodimer.

It localises to the cytoplasm. The enzyme catalyses tRNA(Tyr) + L-tyrosine + ATP = L-tyrosyl-tRNA(Tyr) + AMP + diphosphate + H(+). Its function is as follows. Catalyzes the attachment of tyrosine to tRNA(Tyr) in a two-step reaction: tyrosine is first activated by ATP to form Tyr-AMP and then transferred to the acceptor end of tRNA(Tyr). This is Tyrosine--tRNA ligase from Wolbachia pipientis subsp. Culex pipiens (strain wPip).